Consider the following 110-residue polypeptide: ATP-dependent Clp protease adapter protein ClpS 2 (110 aa).

Residues 1–24 (MSNDENRSGSPTGPNTSVITKVKP) form a disordered region. Over residues 8-19 (SGSPTGPNTSVI) the composition is skewed to polar residues.

The protein belongs to the ClpS family. As to quaternary structure, binds to the N-terminal domain of the chaperone ClpA.

Its function is as follows. Involved in the modulation of the specificity of the ClpAP-mediated ATP-dependent protein degradation. This Bradyrhizobium diazoefficiens (strain JCM 10833 / BCRC 13528 / IAM 13628 / NBRC 14792 / USDA 110) protein is ATP-dependent Clp protease adapter protein ClpS 2.